Reading from the N-terminus, the 590-residue chain is NADH-ubiquinone oxidoreductase chain 5 (590 aa).

The next 15 membrane-spanning stretches (helical) occupy residues M1–M21, L31–L51, L77–Y97, I104–A124, L130–G150, I167–M187, L190–T210, T230–I250, I261–A281, A314–I336, L355–L375, I398–F418, H439–Q461, V466–L486, and M568–M588.

Belongs to the complex I subunit 5 family.

It is found in the mitochondrion inner membrane. It carries out the reaction a ubiquinone + NADH + 5 H(+)(in) = a ubiquinol + NAD(+) + 4 H(+)(out). Core subunit of the mitochondrial membrane respiratory chain NADH dehydrogenase (Complex I) that is believed to belong to the minimal assembly required for catalysis. Complex I functions in the transfer of electrons from NADH to the respiratory chain. The immediate electron acceptor for the enzyme is believed to be ubiquinone. The sequence is that of NADH-ubiquinone oxidoreductase chain 5 (MT-ND5) from Lycodon semicarinatus (Ryukyu odd-tooth snake).